Reading from the N-terminus, the 634-residue chain is 1-deoxy-D-xylulose-5-phosphate synthase (634 aa).

Thiamine diphosphate contacts are provided by residues H74 and 115-117 (AHS). D146 contributes to the Mg(2+) binding site. Thiamine diphosphate is bound by residues 147-148 (GA), N176, Y283, and E365. N176 is a Mg(2+) binding site.

It belongs to the transketolase family. DXPS subfamily. Homodimer. It depends on Mg(2+) as a cofactor. Thiamine diphosphate is required as a cofactor.

The enzyme catalyses D-glyceraldehyde 3-phosphate + pyruvate + H(+) = 1-deoxy-D-xylulose 5-phosphate + CO2. Its pathway is metabolic intermediate biosynthesis; 1-deoxy-D-xylulose 5-phosphate biosynthesis; 1-deoxy-D-xylulose 5-phosphate from D-glyceraldehyde 3-phosphate and pyruvate: step 1/1. Its function is as follows. Catalyzes the acyloin condensation reaction between C atoms 2 and 3 of pyruvate and glyceraldehyde 3-phosphate to yield 1-deoxy-D-xylulose-5-phosphate (DXP). This is 1-deoxy-D-xylulose-5-phosphate synthase from Burkholderia ambifaria (strain MC40-6).